The following is a 142-amino-acid chain: Large-conductance mechanosensitive channel (142 aa).

The next 3 helical transmembrane spans lie at 10-30, 40-60, and 86-106; these read FAVK…GAFG, LIMP…LFVV, and GNFI…FMMV.

Belongs to the MscL family. In terms of assembly, homopentamer.

Its subcellular location is the cell inner membrane. Channel that opens in response to stretch forces in the membrane lipid bilayer. May participate in the regulation of osmotic pressure changes within the cell. This Delftia acidovorans (strain DSM 14801 / SPH-1) protein is Large-conductance mechanosensitive channel.